The primary structure comprises 574 residues: MRYALERFITDIKDAIAATGKVPVDLIEITTPKPNIPADRTFVTFKAAKVLGVDPAKLAAELAATIAPPPDSLIGEVTATGAFLNFSLHPQRLAAAVLNEIETAGEAYGTVADGAGRTVVIDYSSPNIAKRMHVGHIRSTIIGQALVHIFRALGYRVIGDNHLGDWGTQFGIILAAMQRYGRPQNEGEAAMAELEALYARYNAEMKDDPALEDEARRWSLALERGDPEARSLWQWCVDLSLRAAQRNYDRLGIRFDYAYGESFYEAMLPGVIEEALRSEAAFRDVDGAVVAELDKLPKFIIQRSDGGTVYMTRDIATIKFRLQEFSPSHIIYVVDARQELHFRQLFAIVRAMGYARDVELVHVPFGVITTPDGQPLSTKKGNMVYLEALLDDAVARARALVDAKSADLPLEERAAIAEAVGIGAVIYNDLYQDPRRNITLDWDRMLSIEGNSAAYLQYSHARCRSILRRAADEGVALAEADLTLLTHPSEQRLIRHLARLPEAVREAGARYAPFVIADWCYTTAREFGIFFEQCPVLRAETPALRAARLQLVAATANALRNGLALLGIQAPERM.

Positions 126 to 136 (PNIAKRMHVGH) match the 'HIGH' region motif.

This sequence belongs to the class-I aminoacyl-tRNA synthetase family. As to quaternary structure, monomer.

It is found in the cytoplasm. It catalyses the reaction tRNA(Arg) + L-arginine + ATP = L-arginyl-tRNA(Arg) + AMP + diphosphate. This Chloroflexus aggregans (strain MD-66 / DSM 9485) protein is Arginine--tRNA ligase.